The primary structure comprises 518 residues: Protein PNS1 (518 aa).

Residues 1-14 (MSDYPPPNYPPPNH) are compositionally biased toward pro residues. The tract at residues 1 to 24 (MSDYPPPNYPPPNHPQYQQQQDET) is disordered. Residues 1 to 63 (MSDYPPPNYP…KVEKPKFNDW (63 aa)) are Cytoplasmic-facing. Residues 64 to 84 (PFAIFFWLVVAGFIAVAGITL) form a helical membrane-spanning segment. The Extracellular portion of the chain corresponds to 85–111 (NALRSTYGFQGGSIYGSGNTFTLNTNT). Residues 112–132 (IILFAFIIVMAFILSAAIIVF) form a helical membrane-spanning segment. The Cytoplasmic portion of the chain corresponds to 133-139 (ARLAPKA). A helical transmembrane segment spans residues 140 to 160 (FIVTGVILNVVLGIGTAIFYF). The Extracellular portion of the chain corresponds to 161-163 (VEK). The helical transmembrane segment at 164–184 (YYSAAIVFLIFALFGAWCYWS) threads the bilayer. Residues 185–210 (SRHRIPLSATILTIVIDVMKMYPSTL) are Cytoplasmic-facing. The helical transmembrane segment at 211–231 (IASFIGLIFSAAFSALFSIVI) threads the bilayer. Topologically, residues 232–256 (VATYVKYDPNSNNEACSVGGGSCSK) are extracellular. The chain crosses the membrane as a helical span at residues 257-277 (GKLIGVLVFVFFAGYYISEVI). Over 278 to 314 (RNVIHVVIAGIYGTWYYLANSDQGAPKHPALSSLKRA) the chain is Cytoplasmic. The chain crosses the membrane as a helical span at residues 315–335 (LTYCFGSITFGSLIVSLIQLL). The Extracellular segment spans residues 336-351 (RQFISILRSNFAADGN). A helical membrane pass occupies residues 352–372 (GWGVCGMIILDFFVGFIDWLV). At 373-417 (RYLNKYAYCYVALYGKSYIKSAKDTFDLIRFKGMDALINDMFINT) the chain is on the cytoplasmic side. Residues 418–438 (ALNLYSLFVAYLVALLAYLYL) form a helical membrane-spanning segment. Residues 439–445 (KFTKPEY) lie on the Extracellular side of the membrane. A helical transmembrane segment spans residues 446–466 (NSGGAFYAPVIAFAFLIAGQI). Residues 467-518 (NRISLTVIESGTATFFVALAKDPEIFQMTNRNRFDDIFRNYPQVLEKITSDH) are Cytoplasmic-facing.

This sequence belongs to the CTL (choline transporter-like) family.

The protein resides in the cell membrane. Functionally, probably involved in transport through the plasma membrane. This is Protein PNS1 (PNS1) from Candida albicans (strain SC5314 / ATCC MYA-2876) (Yeast).